The sequence spans 660 residues: Probable rhamnogalacturonate lyase B (660 aa).

The N-terminal stretch at 1–20 is a signal peptide; it reads MRLSVSLGLASLWTAIGATA. 11 N-linked (GlcNAc...) asparagine glycosylation sites follow: Asn22, Asn27, Asn109, Asn142, Asn238, Asn284, Asn432, Asn492, Asn532, Asn594, and Asn635.

It belongs to the polysaccharide lyase 4 family.

It is found in the secreted. It catalyses the reaction Endotype eliminative cleavage of L-alpha-rhamnopyranosyl-(1-&gt;4)-alpha-D-galactopyranosyluronic acid bonds of rhamnogalacturonan I domains in ramified hairy regions of pectin leaving L-rhamnopyranose at the reducing end and 4-deoxy-4,5-unsaturated D-galactopyranosyluronic acid at the non-reducing end.. Its function is as follows. Pectinolytic enzymes consist of four classes of enzymes: pectin lyase, polygalacturonase, pectin methylesterase and rhamnogalacturonase. Degrades the rhamnogalacturonan I (RG-I) backbone of pectin. This is Probable rhamnogalacturonate lyase B (rglB) from Aspergillus terreus (strain NIH 2624 / FGSC A1156).